A 424-amino-acid chain; its full sequence is Gamma-glutamyl phosphate reductase (424 aa).

It belongs to the gamma-glutamyl phosphate reductase family.

The protein resides in the cytoplasm. It catalyses the reaction L-glutamate 5-semialdehyde + phosphate + NADP(+) = L-glutamyl 5-phosphate + NADPH + H(+). Its pathway is amino-acid biosynthesis; L-proline biosynthesis; L-glutamate 5-semialdehyde from L-glutamate: step 2/2. Catalyzes the NADPH-dependent reduction of L-glutamate 5-phosphate into L-glutamate 5-semialdehyde and phosphate. The product spontaneously undergoes cyclization to form 1-pyrroline-5-carboxylate. The polypeptide is Gamma-glutamyl phosphate reductase (Shewanella woodyi (strain ATCC 51908 / MS32)).